Here is a 418-residue protein sequence, read N- to C-terminus: Probable mitochondrial adenine nucleotide transporter BTL2 (418 aa).

Solcar repeat units lie at residues 122–205, 215–300, and 329–414; these read MNTR…YRKQ, ATNF…LKSS, and LGPI…MKIV. The next 6 helical transmembrane spans lie at 127–147, 180–200, 221–241, 276–296, 335–355, and 383–403; these read HLWA…PLER, GNLL…CAYD, FVAG…LDTI, LVPS…VYDI, LMYG…FEVV, and IPAL…SASI.

The protein belongs to the mitochondrial carrier (TC 2.A.29) family.

It localises to the mitochondrion inner membrane. In terms of biological role, probable mitochondrial adenylate carrier that catalyzes the transport of ATP, ADP and AMP. The chain is Probable mitochondrial adenine nucleotide transporter BTL2 from Arabidopsis thaliana (Mouse-ear cress).